The following is a 418-amino-acid chain: EPS I polysaccharide export inner membrane protein EpsF (418 aa).

The next 10 helical transmembrane spans lie at 21–41 (VLVV…LPII), 45–65 (CAAI…LATA), 142–162 (PLLV…IAIY), 170–190 (YVVF…GSAI), 222–242 (AGTH…VLFL), 262–282 (LIVL…EFVM), 296–316 (SAWE…AWLL), 326–346 (MAFL…PAVG), 347–367 (ARLF…FFFA), and 377–397 (KTLA…IVSA).

The protein to S.marcescens SfuB.

It localises to the cell inner membrane. Its function is as follows. Probably involved in polymerization and/or export of exopolysaccharide EPS I which functions as a virulence factor. May play a role in export of EPS I or its intermediates across the membranes. The polypeptide is EPS I polysaccharide export inner membrane protein EpsF (epsF) (Ralstonia nicotianae (strain ATCC BAA-1114 / GMI1000) (Ralstonia solanacearum)).